Consider the following 452-residue polypeptide: MTSRTSLTIVLAAGEGTRMRSSLPKVLHQVAGETLLAHVLKAAPEGDGAALAVVIGPDHQAVAEEVGRVRPQATTYVQRERLGTAHAVLAAREAIAAGADDLLVAFGDTPLISAATFARLRQPLAQGVALVALGFRPADPTGYGRLLVQNDRLVGIREQADASADERAIGLCNAGVMAIDGKAALRILERIGSANAKGEYYLTDAVAIARELGLEAAVIETSEDEVRGINTKAQLAEAEAVMQARLRQAALDAGVTMIAPETVFLAADTTFGKDVTIEPFVVIGAGVSIGDGAVIHAFSHLVQAKIGKNASVGPYARLRPGTSLGDGAKIGNFVETKAAQIDPGAKVNHLTYIGDAHIGPNANIGAGTITCNYDGFGKHKTEIGAGAFVGSNSSLVAPLKIGAGAYVGSGSVVTRDVPDDALAVERNQQKVSEGWAKRFREAKTRGKTRPAK.

Residues 1 to 232 (MTSRTSLTIV…EDEVRGINTK (232 aa)) form a pyrophosphorylase region. Residues 11–14 (LAAG), lysine 25, glutamine 78, and 83–84 (GT) contribute to the UDP-N-acetyl-alpha-D-glucosamine site. Aspartate 108 serves as a coordination point for Mg(2+). Positions 144, 158, 173, and 230 each coordinate UDP-N-acetyl-alpha-D-glucosamine. Position 230 (asparagine 230) interacts with Mg(2+). The segment at 233 to 253 (AQLAEAEAVMQARLRQAALDA) is linker. The N-acetyltransferase stretch occupies residues 254-452 (GVTMIAPETV…KTRGKTRPAK (199 aa)). UDP-N-acetyl-alpha-D-glucosamine is bound by residues arginine 319 and lysine 337. The Proton acceptor role is filled by histidine 349. 2 residues coordinate UDP-N-acetyl-alpha-D-glucosamine: tyrosine 352 and asparagine 363. Acetyl-CoA is bound by residues alanine 366, 372-373 (NY), serine 391, serine 409, and arginine 426.

In the N-terminal section; belongs to the N-acetylglucosamine-1-phosphate uridyltransferase family. The protein in the C-terminal section; belongs to the transferase hexapeptide repeat family. In terms of assembly, homotrimer. Mg(2+) is required as a cofactor.

The protein resides in the cytoplasm. It catalyses the reaction alpha-D-glucosamine 1-phosphate + acetyl-CoA = N-acetyl-alpha-D-glucosamine 1-phosphate + CoA + H(+). The catalysed reaction is N-acetyl-alpha-D-glucosamine 1-phosphate + UTP + H(+) = UDP-N-acetyl-alpha-D-glucosamine + diphosphate. Its pathway is nucleotide-sugar biosynthesis; UDP-N-acetyl-alpha-D-glucosamine biosynthesis; N-acetyl-alpha-D-glucosamine 1-phosphate from alpha-D-glucosamine 6-phosphate (route II): step 2/2. It participates in nucleotide-sugar biosynthesis; UDP-N-acetyl-alpha-D-glucosamine biosynthesis; UDP-N-acetyl-alpha-D-glucosamine from N-acetyl-alpha-D-glucosamine 1-phosphate: step 1/1. It functions in the pathway bacterial outer membrane biogenesis; LPS lipid A biosynthesis. Its function is as follows. Catalyzes the last two sequential reactions in the de novo biosynthetic pathway for UDP-N-acetylglucosamine (UDP-GlcNAc). The C-terminal domain catalyzes the transfer of acetyl group from acetyl coenzyme A to glucosamine-1-phosphate (GlcN-1-P) to produce N-acetylglucosamine-1-phosphate (GlcNAc-1-P), which is converted into UDP-GlcNAc by the transfer of uridine 5-monophosphate (from uridine 5-triphosphate), a reaction catalyzed by the N-terminal domain. The sequence is that of Bifunctional protein GlmU from Rhodopseudomonas palustris (strain BisA53).